Consider the following 137-residue polypeptide: NADH-ubiquinone oxidoreductase chain 3 (137 aa).

3 consecutive transmembrane segments (helical) span residues 6–26 (LFILFVSIIALLFLFINLIFA), 57–77 (FFIFALVYLLLDLEILLTFPF), and 86–106 (IYGLIILLGFITIITIGFVYE).

It belongs to the complex I subunit 3 family.

Its subcellular location is the mitochondrion membrane. The catalysed reaction is a ubiquinone + NADH + 5 H(+)(in) = a ubiquinol + NAD(+) + 4 H(+)(out). In terms of biological role, core subunit of the mitochondrial membrane respiratory chain NADH dehydrogenase (Complex I) that is believed to belong to the minimal assembly required for catalysis. Complex I functions in the transfer of electrons from NADH to the respiratory chain. The immediate electron acceptor for the enzyme is believed to be ubiquinone. This chain is NADH-ubiquinone oxidoreductase chain 3 (ND3), found in Podospora anserina (strain S / ATCC MYA-4624 / DSM 980 / FGSC 10383) (Pleurage anserina).